Consider the following 311-residue polypeptide: Vomeronasal type-1 receptor 105 (311 aa).

Over 1-17 (MMNKNSRLYTDSNIRNT) the chain is Extracellular. A helical transmembrane segment spans residues 18–38 (FFAEIGIGVSANSLLLLFNIF). Over 39-50 (KLICGQRSRLTD) the chain is Cytoplasmic. A helical transmembrane segment spans residues 51 to 71 (LPIGLLSLINLLMLLMTAFIA). At 72-94 (TDTFISWRGWDDIICKSLLYLYR) the chain is on the extracellular side. An intrachain disulfide couples C86 to C173. Residues 95–115 (TFRGLSLCTSCLLSVLQAIIL) form a helical membrane-spanning segment. The Cytoplasmic portion of the chain corresponds to 116–135 (SPRSSCLAKFKHKPSHHISC). A helical transmembrane segment spans residues 136 to 156 (AILSLSVLYMFISSHLLVSII). At 157–188 (ATPNLTTNDFIHVTQWCSILPMSYLMQSMFST) the chain is on the extracellular side. N160 is a glycosylation site (N-linked (GlcNAc...) asparagine). A helical transmembrane segment spans residues 189–209 (LLAIRDVFLISLMVLSTWYMV). The Cytoplasmic segment spans residues 210-239 (ALLCRHRKQTRHLQGTSLSPKASPEQRATR). The chain crosses the membrane as a helical span at residues 240-260 (SILMLMSLFVLMSVFDSIVCS). The Extracellular portion of the chain corresponds to 261–271 (SRTMYLNDPIS). The chain crosses the membrane as a helical span at residues 272–292 (YSYQLFMVHIYATVSPFVFIV). Topologically, residues 293–311 (TEKHIVNSLRSMCVKVMNV) are cytoplasmic.

This sequence belongs to the G-protein coupled receptor 1 family. In terms of tissue distribution, expressed in 1-4% of neurons of the vomeronasal organ. Only one pheromone receptor gene may be expressed in a particular neuron. Not expressed in the main olfactory epithelium.

Its subcellular location is the cell membrane. Functionally, putative pheromone receptor implicated in the regulation of social as well as reproductive behavior. The chain is Vomeronasal type-1 receptor 105 (Vom1r105) from Rattus norvegicus (Rat).